The sequence spans 65 residues: Large ribosomal subunit protein bL35 (65 aa).

The segment at M1–I22 is disordered.

This sequence belongs to the bacterial ribosomal protein bL35 family.

This is Large ribosomal subunit protein bL35 from Flavobacterium psychrophilum (strain ATCC 49511 / DSM 21280 / CIP 103535 / JIP02/86).